The sequence spans 102 residues: Small ribosomal subunit protein uS10 (102 aa).

This sequence belongs to the universal ribosomal protein uS10 family. As to quaternary structure, part of the 30S ribosomal subunit.

In terms of biological role, involved in the binding of tRNA to the ribosomes. The polypeptide is Small ribosomal subunit protein uS10 (Latilactobacillus sakei subsp. sakei (strain 23K) (Lactobacillus sakei subsp. sakei)).